The chain runs to 708 residues: Leukotoxin translocation ATP-binding protein LktB (708 aa).

Residues 1–126 (MEANHQRNDL…ACYQGQLILV (126 aa)) enclose the Peptidase C39 domain. The ABC transmembrane type-1 domain maps to 155–437 (FLETLIVSIF…LAQLWQDFQQ (283 aa)). Transmembrane regions (helical) follow at residues 159–179 (LIVS…FQVV), 192–212 (LNII…LSGL), 270–290 (ALTS…MWYY), 296–316 (LVIL…SPIL), and 389–409 (VMVI…LSIG). The region spanning 469-704 (ISFKNIRFRY…SNGLYSYLHQ (236 aa)) is the ABC transporter domain. Residue 503–510 (GRSGSGKS) coordinates ATP.

This sequence belongs to the ABC transporter superfamily. Protein-1 exporter (TC 3.A.1.109) family. In terms of assembly, homodimer.

Its subcellular location is the cell inner membrane. The catalysed reaction is ATP + H2O + proteinSide 1 = ADP + phosphate + proteinSide 2.. In terms of biological role, part of the ABC transporter complex LktBD involved in leukotoxin export. Transmembrane domains (TMD) form a pore in the inner membrane and the ATP-binding domain (NBD) is responsible for energy generation. The chain is Leukotoxin translocation ATP-binding protein LktB (lktB) from Mannheimia haemolytica (Pasteurella haemolytica).